Reading from the N-terminus, the 120-residue chain is Protein RALF-like 1 (120 aa).

The signal sequence occupies residues 1-26 (MDKSFTLFLTLTILVVFIISSPPVQA). Positions 27–71 (GFANDLGGVAWATTGDNGSGCHGSIAECIGAEEEEMDSEINRRIL) are cleaved as a propeptide — removed in mature form. The N-linked (GlcNAc...) asparagine glycan is linked to Asn-43. 2 disulfide bridges follow: Cys-89/Cys-99 and Cys-112/Cys-118.

It belongs to the plant rapid alkalinization factor (RALF) family. Interacts with FER and promotes its phosphorylation and subsequent activation. Post-translationally, proteolytically cleaved, probably by S1P, a subtilisin-like serine protease (subtilase). In terms of tissue distribution, expressed in roots and stems.

The protein localises to the secreted. Cell signaling peptide that may regulate plant stress, growth, and development. Mediates a rapid alkalinization of extracellular space by mediating a transient increase in the cytoplasmic Ca(2+) concentration leading to a calcium-dependent signaling events through a cell surface receptor and a concomitant activation of some intracellular mitogen-activated protein kinases. Mostly active in roots. Prevents plant growth (e.g. root and leaf length). Suppresses cell elongation of the primary root by activating the cell surface receptor FER and triggering phosphorylation of AHA2 and subsequent extracellular alkalinization. The sequence is that of Protein RALF-like 1 (RALF1) from Arabidopsis thaliana (Mouse-ear cress).